The following is a 71-amino-acid chain: Defensin 1 (71 aa).

A signal peptide spans 1–25 (KTVAGFCIFFLVLFLAQEGVVKTEA). Disulfide bonds link cysteine 28-cysteine 71, cysteine 39-cysteine 60, and cysteine 45-cysteine 65.

It belongs to the DEFL family. May form dimers. In terms of processing, not glycosylated. Contains 4 disulfide bonds. Post-translationally, met-61 and Met-63 might be oxidized in some molecules.

Probably has antifungal activity. This chain is Defensin 1, found in Arachis hypogaea (Peanut).